Reading from the N-terminus, the 260-residue chain is Flap endonuclease Xni (260 aa).

A Mg(2+)-binding site is contributed by aspartate 109. The region spanning 165–259 (VKPSQLADYW…DIRFTGPNKA (95 aa)) is the 5'-3' exonuclease domain. Positions 176, 185, 187, and 190 each coordinate K(+). An interaction with DNA region spans residues 189–194 (GIGPKA).

It belongs to the Xni family. The cofactor is Mg(2+). K(+) is required as a cofactor.

In terms of biological role, has flap endonuclease activity. During DNA replication, flap endonucleases cleave the 5'-overhanging flap structure that is generated by displacement synthesis when DNA polymerase encounters the 5'-end of a downstream Okazaki fragment. The chain is Flap endonuclease Xni from Vibrio parahaemolyticus serotype O3:K6 (strain RIMD 2210633).